The primary structure comprises 165 residues: Ribosome maturation factor RimM (165 aa).

The 72-residue stretch at 90–161 folds into the PRC barrel domain; it reads PDTYYVSDLK…KIIIKPVGEW (72 aa).

The protein belongs to the RimM family. As to quaternary structure, binds ribosomal protein uS19.

The protein localises to the cytoplasm. Its function is as follows. An accessory protein needed during the final step in the assembly of 30S ribosomal subunit, possibly for assembly of the head region. Essential for efficient processing of 16S rRNA. May be needed both before and after RbfA during the maturation of 16S rRNA. It has affinity for free ribosomal 30S subunits but not for 70S ribosomes. This chain is Ribosome maturation factor RimM, found in Clostridium beijerinckii (strain ATCC 51743 / NCIMB 8052) (Clostridium acetobutylicum).